A 91-amino-acid polypeptide reads, in one-letter code: DNA-directed RNA polymerase subunit omega (91 aa).

Belongs to the RNA polymerase subunit omega family. The RNAP catalytic core consists of 2 alpha, 1 beta, 1 beta' and 1 omega subunit. When a sigma factor is associated with the core the holoenzyme is formed, which can initiate transcription.

The catalysed reaction is RNA(n) + a ribonucleoside 5'-triphosphate = RNA(n+1) + diphosphate. Its function is as follows. Promotes RNA polymerase assembly. Latches the N- and C-terminal regions of the beta' subunit thereby facilitating its interaction with the beta and alpha subunits. The protein is DNA-directed RNA polymerase subunit omega of Nocardia farcinica (strain IFM 10152).